Consider the following 272-residue polypeptide: Putative pyruvate, phosphate dikinase regulatory protein (272 aa).

151 to 158 (GISRTSKT) is a binding site for ADP.

This sequence belongs to the pyruvate, phosphate/water dikinase regulatory protein family. PDRP subfamily.

The enzyme catalyses N(tele)-phospho-L-histidyl/L-threonyl-[pyruvate, phosphate dikinase] + ADP = N(tele)-phospho-L-histidyl/O-phospho-L-threonyl-[pyruvate, phosphate dikinase] + AMP + H(+). The catalysed reaction is N(tele)-phospho-L-histidyl/O-phospho-L-threonyl-[pyruvate, phosphate dikinase] + phosphate + H(+) = N(tele)-phospho-L-histidyl/L-threonyl-[pyruvate, phosphate dikinase] + diphosphate. Its function is as follows. Bifunctional serine/threonine kinase and phosphorylase involved in the regulation of the pyruvate, phosphate dikinase (PPDK) by catalyzing its phosphorylation/dephosphorylation. The chain is Putative pyruvate, phosphate dikinase regulatory protein from Staphylococcus aureus (strain USA300).